Consider the following 139-residue polypeptide: MLSPRKTKFRKQHRGRMRGKATRGNTLSFGDYGLQALEPSWITSRQIEAGRRAMTRYVRRGGKIWIRIFPDKPVTMRPAETRMGSGKGAPEYWVAVVKPGRIMYEMNGVPESTAREAMRLAAFKMPIKTKFVARPKEES.

The segment covering 1-21 (MLSPRKTKFRKQHRGRMRGKA) has biased composition (basic residues). Positions 1 to 23 (MLSPRKTKFRKQHRGRMRGKATR) are disordered.

It belongs to the universal ribosomal protein uL16 family. Part of the 50S ribosomal subunit.

In terms of biological role, binds 23S rRNA and is also seen to make contacts with the A and possibly P site tRNAs. This Acaryochloris marina (strain MBIC 11017) protein is Large ribosomal subunit protein uL16.